Reading from the N-terminus, the 166-residue chain is Cyclin-dependent kinase 4 inhibitor D (166 aa).

Met-1 carries the N-acetylmethionine modification. ANK repeat units lie at residues 41 to 69 (FGKTALQVMMFGSPAVALELLKQGASPNV), 73 to 102 (SGTSPVHDAARTGFLDTLKVLVEHGADVNA), 106 to 135 (TGSLPIHLAIREGHSSVVSFLAPESDLHHR), and 138 to 165 (SGLTPLELARQRGAQNLMDILQGHMMIP).

This sequence belongs to the CDKN2 cyclin-dependent kinase inhibitor family. As to quaternary structure, interacts with CDK6.

The protein resides in the nucleus. The protein localises to the cytoplasm. In terms of biological role, interacts strongly with CDK4 and CDK6 and inhibits them. The polypeptide is Cyclin-dependent kinase 4 inhibitor D (Cdkn2d) (Mus musculus (Mouse)).